The primary structure comprises 481 residues: 5-hydroxytryptamine receptor 2B (481 aa).

Topologically, residues 1 to 56 (MALSYRVSELQSTIPEHILQSTFVHVISSNWSGLQTESIPEEMKQIVEEQGNKLHW) are extracellular. N30 carries an N-linked (GlcNAc...) asparagine glycan. A helical transmembrane segment spans residues 57 to 79 (AALLILMVIIPTIGGNTLVILAV). Over 80-90 (SLEKKLQYATN) the chain is Cytoplasmic. Residues 91-113 (YFLMSLAVADLLVGLFVMPIALL) form a helical membrane-spanning segment. The Extracellular segment spans residues 114–129 (TIMFEAMWPLPLVLCP). C128 and C207 are oxidised to a cystine. A helical membrane pass occupies residues 130–151 (AWLFLDVLFSTASIMHLCAISV). D135 and T140 together coordinate ergotamine. A DRY motif; important for ligand-induced conformation changes motif is present at residues 152–154 (DRY). The Cytoplasmic segment spans residues 152–171 (DRYIAIKKPIQANQYNSRAT). Residues 172-192 (AFIKITVVWLISIGIAIPVPI) form a helical membrane-spanning segment. The Extracellular segment spans residues 193 to 216 (KGIETDVDNPNNITCVLTKERFGD). Residue L209 coordinates ergotamine. The [DE]RFG motif; may stabilize a conformation that preferentially activates signaling via beta-arrestin family members motif lies at 212 to 215 (ERFG). The helical transmembrane segment at 217-239 (FMLFGSLAAFFTPLAIMIVTYFL) threads the bilayer. Over 240–324 (TIHALQKKAY…TISNEQRASK (85 aa)) the chain is Cytoplasmic. A helical transmembrane segment spans residues 325-345 (VLGIVFFLFLLMWCPFFITNI). Residues 346-360 (TLVLCDSCNQTTLQM) lie on the Extracellular side of the membrane. The cysteines at positions 350 and 353 are disulfide-linked. A helical membrane pass occupies residues 361–382 (LLEIFVWIGYVSSGVNPLVYTL). Residues 376 to 380 (NPLVY) carry the NPxxY motif; important for ligand-induced conformation changes and signaling motif. The Cytoplasmic portion of the chain corresponds to 383–481 (FNKTFRDAFG…DKTEEQVSYV (99 aa)). A lipid anchor (S-palmitoyl cysteine) is attached at C397. The PDZ-binding signature appears at 479 to 481 (SYV).

This sequence belongs to the G-protein coupled receptor 1 family. In terms of assembly, interacts (via C-terminus) with MPDZ. As to expression, ubiquitous. Detected in liver, kidney, heart, pulmonary artery, and intestine. Detected at lower levels in blood, placenta and brain, especially in cerebellum, occipital cortex and frontal cortex.

Its subcellular location is the cell membrane. The protein resides in the synapse. It is found in the synaptosome. In terms of biological role, G-protein coupled receptor for 5-hydroxytryptamine (serotonin). Also functions as a receptor for various ergot alkaloid derivatives and psychoactive substances. Ligand binding causes a conformation change that triggers signaling via guanine nucleotide-binding proteins (G proteins) and modulates the activity of downstream effectors. HTR2B is coupled to G(q)/G(11) G alpha proteins and activates phospholipase C-beta, releasing diacylglycerol (DAG) and inositol 1,4,5-trisphosphate (IP3) second messengers that modulate the activity of phosphatidylinositol 3-kinase and promote the release of Ca(2+) ions from intracellular stores, respectively. Beta-arrestin family members inhibit signaling via G proteins and mediate activation of alternative signaling pathways. Plays a role in the regulation of dopamine and 5-hydroxytryptamine release, 5-hydroxytryptamine uptake and in the regulation of extracellular dopamine and 5-hydroxytryptamine levels, and thereby affects neural activity. May play a role in the perception of pain. Plays a role in the regulation of behavior, including impulsive behavior. Required for normal proliferation of embryonic cardiac myocytes and normal heart development. Protects cardiomyocytes against apoptosis. Plays a role in the adaptation of pulmonary arteries to chronic hypoxia. Plays a role in vasoconstriction. Required for normal osteoblast function and proliferation, and for maintaining normal bone density. Required for normal proliferation of the interstitial cells of Cajal in the intestine. This is 5-hydroxytryptamine receptor 2B from Homo sapiens (Human).